A 307-amino-acid polypeptide reads, in one-letter code: 2-dehydropantoate 2-reductase (307 aa).

NADP(+) contacts are provided by residues 7 to 12 (GSGAMG), N102, and A128. N102 is a substrate binding site. K184 functions as the Proton donor in the catalytic mechanism. Substrate contacts are provided by N188, N192, and S255. E268 provides a ligand contact to NADP(+).

Belongs to the ketopantoate reductase family.

It is found in the cytoplasm. The enzyme catalyses (R)-pantoate + NADP(+) = 2-dehydropantoate + NADPH + H(+). It participates in cofactor biosynthesis; (R)-pantothenate biosynthesis; (R)-pantoate from 3-methyl-2-oxobutanoate: step 2/2. Catalyzes the NADPH-dependent reduction of ketopantoate into pantoic acid. The polypeptide is 2-dehydropantoate 2-reductase (apbA) (Streptococcus pyogenes serotype M1).